Here is a 509-residue protein sequence, read N- to C-terminus: Maturase K (509 aa).

It belongs to the intron maturase 2 family. MatK subfamily.

The protein localises to the plastid. Its subcellular location is the chloroplast. Functionally, usually encoded in the trnK tRNA gene intron. Probably assists in splicing its own and other chloroplast group II introns. The sequence is that of Maturase K from Clematis ligusticifolia (Western white clematis).